The primary structure comprises 644 residues: Interleukin-23 receptor (644 aa).

Residues 1–23 (MSHLTLQLHVVIALYVLFRWCHG) form the signal peptide. Residues 24–374 (GITSINCSGD…PASGNHQDIG (351 aa)) lie on the Extracellular side of the membrane. N-linked (GlcNAc...) asparagine glycans are attached at residues Asn-47, Asn-130, and Asn-232. 2 consecutive Fibronectin type-III domains span residues 127–217 (APSN…LDDI) and 219–318 (IPSA…TSQE). Residues 375 to 395 (LLSGMVFLAIMLPIFSLIGIF) form a helical membrane-spanning segment. Residues 396 to 644 (NRSLRIGIKR…HFSRISLFQK (249 aa)) are Cytoplasmic-facing.

The protein belongs to the type I cytokine receptor family. Type 2 subfamily. In terms of assembly, heterodimer with IL12RB1. In presence of IL23, the heterodimer forms the IL23 receptor. Interacts with JAK2 and in presence of IL23 with STAT3. Phosphorylated in response to IL23. In terms of tissue distribution, expressed by Th1, Th2 and dendritic cells.

It is found in the cell membrane. In terms of biological role, associates with IL12RB1 to form the interleukin-23 receptor. Binds IL23 and mediates T-cells, NK cells and possibly certain macrophage/myeloid cells stimulation probably through activation of the Jak-Stat signaling cascade. IL23 functions in innate and adaptive immunity and may participate in acute response to infection in peripheral tissues. IL23 may be responsible for autoimmune inflammatory diseases and be important for tumorigenesis. This Mus musculus (Mouse) protein is Interleukin-23 receptor (Il23r).